A 459-amino-acid polypeptide reads, in one-letter code: Bifunctional protein GlmU (459 aa).

The tract at residues 1–230 is pyrophosphorylase; it reads MSNRFAVILA…FDETLGVNDR (230 aa). Residues 9 to 12, Lys-23, Gln-73, and 78 to 79 each bind UDP-N-acetyl-alpha-D-glucosamine; these read LAAG and GT. Asp-103 is a binding site for Mg(2+). Residues Gly-140, Glu-155, Asn-170, and Asn-228 each coordinate UDP-N-acetyl-alpha-D-glucosamine. Residue Asn-228 coordinates Mg(2+). Residues 231–251 form a linker region; the sequence is VALSQAEVIMKNRINHKNMVN. An N-acetyltransferase region spans residues 252-459; it reads GVTIIDPSNT…VDQLLNKKKS (208 aa). 2 residues coordinate UDP-N-acetyl-alpha-D-glucosamine: Arg-333 and Lys-351. His-363 serves as the catalytic Proton acceptor. UDP-N-acetyl-alpha-D-glucosamine contacts are provided by Tyr-366 and Asn-377. Acetyl-CoA is bound by residues 386 to 387, Ala-423, and Arg-440; that span reads NY.

In the N-terminal section; belongs to the N-acetylglucosamine-1-phosphate uridyltransferase family. It in the C-terminal section; belongs to the transferase hexapeptide repeat family. Homotrimer. Requires Mg(2+) as cofactor.

Its subcellular location is the cytoplasm. It catalyses the reaction alpha-D-glucosamine 1-phosphate + acetyl-CoA = N-acetyl-alpha-D-glucosamine 1-phosphate + CoA + H(+). The enzyme catalyses N-acetyl-alpha-D-glucosamine 1-phosphate + UTP + H(+) = UDP-N-acetyl-alpha-D-glucosamine + diphosphate. The protein operates within nucleotide-sugar biosynthesis; UDP-N-acetyl-alpha-D-glucosamine biosynthesis; N-acetyl-alpha-D-glucosamine 1-phosphate from alpha-D-glucosamine 6-phosphate (route II): step 2/2. It participates in nucleotide-sugar biosynthesis; UDP-N-acetyl-alpha-D-glucosamine biosynthesis; UDP-N-acetyl-alpha-D-glucosamine from N-acetyl-alpha-D-glucosamine 1-phosphate: step 1/1. It functions in the pathway bacterial outer membrane biogenesis; LPS lipid A biosynthesis. Functionally, catalyzes the last two sequential reactions in the de novo biosynthetic pathway for UDP-N-acetylglucosamine (UDP-GlcNAc). The C-terminal domain catalyzes the transfer of acetyl group from acetyl coenzyme A to glucosamine-1-phosphate (GlcN-1-P) to produce N-acetylglucosamine-1-phosphate (GlcNAc-1-P), which is converted into UDP-GlcNAc by the transfer of uridine 5-monophosphate (from uridine 5-triphosphate), a reaction catalyzed by the N-terminal domain. The protein is Bifunctional protein GlmU of Bacillus cytotoxicus (strain DSM 22905 / CIP 110041 / 391-98 / NVH 391-98).